A 274-amino-acid polypeptide reads, in one-letter code: Penicillin-insensitive murein endopeptidase (274 aa).

A signal peptide spans 1–19 (MKKTAIALLAWFVSSASLA). Disulfide bonds link Cys-44–Cys-265, Cys-187–Cys-235, and Cys-216–Cys-223. Residues His-110, His-113, Asp-120, Asp-147, His-150, and His-211 each coordinate Zn(2+). The segment at 225-274 (DQPLPPPGDGCGAELQSWFEPPKPGTTKPEKKTPPPLPPSCQALLDEHVL) is disordered.

The protein belongs to the peptidase M74 family. In terms of assembly, dimer. Zn(2+) serves as cofactor.

The protein resides in the periplasm. Its function is as follows. Murein endopeptidase that cleaves the D-alanyl-meso-2,6-diamino-pimelyl amide bond that connects peptidoglycan strands. Likely plays a role in the removal of murein from the sacculus. This Salmonella arizonae (strain ATCC BAA-731 / CDC346-86 / RSK2980) protein is Penicillin-insensitive murein endopeptidase.